The chain runs to 581 residues: MTTKLQQLTQNILSSQGKLEADFILKNAQVADVYTLTWRKADIVVKNGTIVALDHSNRFHAKEVEDAAGSYVIPGLIDGHIHIESSMLTPGEFSRVLIPHGITTVITDPHEIANVAGAEGIQFMLDDAQKADMDIFVMLPSSVPGTQFENAGATLTAQDLEPFLHHEQVRGLAEVMDFPAVLNGEEGMLQKILLSKEANLVIDGHCAGLQSEQITGYRAAGIQTDHECVTAEEAIDRVEQGMYVLIREGSAAKNLRDLLPAIQSHNARRFGFCTDDKYVDELMDEGSINYDVAMAIAEGMTPLQAIQLATVNTAECYRLFDRGVLAPGYKADFVLVDDLSTMQAKAVWKNGHKVAENGEMLTSRQEAKVPAHIHHSVHLPSMTKDSLQLSFKKGTRANVMEIVPNQLITNHLVIDVPVKEGVFVPSIEQDLLKLAVIERHHHLHTTGLGIVKGFGLQKGAVATTVAHDSHNALVVGTNDEDMILALSRIQEIQGGFVIVADGEILAEMPLTIGGLMTDVPAQQAKEQLAGLHNALQKLNPTLDFHFLLTFSFVALPVIPALKLTDTGLFDVTTFQHIEVEA.

Belongs to the metallo-dependent hydrolases superfamily. Adenine deaminase family. Mn(2+) is required as a cofactor.

It carries out the reaction adenine + H2O + H(+) = hypoxanthine + NH4(+). This Lysinibacillus sphaericus (strain C3-41) protein is Adenine deaminase.